Consider the following 269-residue polypeptide: Ribosomal RNA small subunit methyltransferase A (269 aa).

S-adenosyl-L-methionine is bound by residues Asn11, Leu13, Gly37, Glu57, Asp85, and Asn104.

This sequence belongs to the class I-like SAM-binding methyltransferase superfamily. rRNA adenine N(6)-methyltransferase family. RsmA subfamily.

Its subcellular location is the cytoplasm. It carries out the reaction adenosine(1518)/adenosine(1519) in 16S rRNA + 4 S-adenosyl-L-methionine = N(6)-dimethyladenosine(1518)/N(6)-dimethyladenosine(1519) in 16S rRNA + 4 S-adenosyl-L-homocysteine + 4 H(+). In terms of biological role, specifically dimethylates two adjacent adenosines (A1518 and A1519) in the loop of a conserved hairpin near the 3'-end of 16S rRNA in the 30S particle. May play a critical role in biogenesis of 30S subunits. This Campylobacter hominis (strain ATCC BAA-381 / DSM 21671 / CCUG 45161 / LMG 19568 / NCTC 13146 / CH001A) protein is Ribosomal RNA small subunit methyltransferase A.